The sequence spans 679 residues: Methyl-accepting chemotaxis protein McpB (679 aa).

3 divergent domain HAMP regions span residues 8 to 56 (AVAQ…RQLR), 63 to 112 (QQVE…AAHI), and 111 to 156 (HIAV…ERLR). In terms of domain architecture, PAS spans 171–213 (YNARIKSALDNVSANVMIADNDLNIIYMNRTVSEMLGRAEADI). Residue His-234 participates in heme binding. A DxT. Important for signal propagation motif is present at residues 285 to 287 (DRT). A divergent domain HAMP 4 region spans residues 289–332 (EHRAEQEVSQLVQAAAAGDFSKRVEEAGKEGFFLRLAKDLNSLV). An HAMP 5 domain is found at 333-385 (DTADRGLRDVSRMLGALAQGDLTQRIEADYQGTFGQLKDFSNDTAQSLSRMLG). The region spanning 390 to 619 (AADTINTAAS…EAAAAAEAMQ (230 aa)) is the Methyl-accepting transducer domain. Disordered regions lie at residues 405 to 425 (NAEL…TASS) and 644 to 679 (ASAR…WEEF). Residues 411 to 425 (RTEQQASSLEETASS) are compositionally biased toward polar residues. Positions 670–679 (ARKEDGWEEF) are enriched in basic and acidic residues. The GWEEF pentapeptide. Important for methylation by CheR2 motif lies at 675–679 (GWEEF).

The protein belongs to the methyl-accepting chemotaxis (MCP) protein family. Homodimer. The PAS domains form dimers in the presence and absence of oxygen. Interacts with the methyltransferase CheR2 via the C-terminal McpB pentapeptide GWEEF. Interacts with the methylesterase/gutaminase CheB2, which also binds to the GWEEF pentapeptide. Post-translationally, methylated by CheR2, but not by CheR1, CheR3 or WspC. Demethylated by CheB2. In vitro, can be methylated by E.coli CheR.

It localises to the cytoplasm. Chemoreceptor that plays a critical role in the virulence and pathogenesis of P.aeruginosa in a variety of hosts. Probably acts through oxygen sensing. Uses a heme-based sensor. Could be involved in chemotaxis. When expressed in E.coli, is able to sense and mediate repellent responses to oxygen, carbon monoxide and nitric oxide. In Pseudomonas aeruginosa (strain ATCC 15692 / DSM 22644 / CIP 104116 / JCM 14847 / LMG 12228 / 1C / PRS 101 / PAO1), this protein is Methyl-accepting chemotaxis protein McpB.